Here is a 336-residue protein sequence, read N- to C-terminus: Biotin synthase (336 aa).

In terms of domain architecture, Radical SAM core spans 55–282; it reads NRVQLSKLLN…QSHVRLTAGR (228 aa). Cys70, Cys74, and Cys77 together coordinate [4Fe-4S] cluster. [2Fe-2S] cluster is bound by residues Cys114, Cys145, Cys205, and Arg277.

It belongs to the radical SAM superfamily. Biotin synthase family. In terms of assembly, homodimer. It depends on [4Fe-4S] cluster as a cofactor. [2Fe-2S] cluster serves as cofactor.

The enzyme catalyses (4R,5S)-dethiobiotin + (sulfur carrier)-SH + 2 reduced [2Fe-2S]-[ferredoxin] + 2 S-adenosyl-L-methionine = (sulfur carrier)-H + biotin + 2 5'-deoxyadenosine + 2 L-methionine + 2 oxidized [2Fe-2S]-[ferredoxin]. The protein operates within cofactor biosynthesis; biotin biosynthesis; biotin from 7,8-diaminononanoate: step 2/2. Functionally, catalyzes the conversion of dethiobiotin (DTB) to biotin by the insertion of a sulfur atom into dethiobiotin via a radical-based mechanism. This is Biotin synthase from Brucella anthropi (strain ATCC 49188 / DSM 6882 / CCUG 24695 / JCM 21032 / LMG 3331 / NBRC 15819 / NCTC 12168 / Alc 37) (Ochrobactrum anthropi).